The sequence spans 383 residues: tRNA (guanine(26)-N(2))-dimethyltransferase (383 aa).

A Trm1 methyltransferase domain is found at 4–371 (EIITEGRTPL…ASPEEFEAVL (368 aa)). Residues arginine 38, arginine 63, aspartate 80, aspartate 108, and alanine 109 each coordinate S-adenosyl-L-methionine. Cysteine 243, cysteine 246, cysteine 258, and cysteine 261 together coordinate Zn(2+).

This sequence belongs to the class I-like SAM-binding methyltransferase superfamily. Trm1 family.

It carries out the reaction guanosine(26) in tRNA + 2 S-adenosyl-L-methionine = N(2)-dimethylguanosine(26) in tRNA + 2 S-adenosyl-L-homocysteine + 2 H(+). Functionally, dimethylates a single guanine residue at position 26 of a number of tRNAs using S-adenosyl-L-methionine as donor of the methyl groups. The protein is tRNA (guanine(26)-N(2))-dimethyltransferase of Methanopyrus kandleri (strain AV19 / DSM 6324 / JCM 9639 / NBRC 100938).